The chain runs to 198 residues: 7-methyl-GTP pyrophosphatase (198 aa).

Asp-69 functions as the Proton acceptor in the catalytic mechanism.

The protein belongs to the Maf family. YceF subfamily. A divalent metal cation serves as cofactor.

It is found in the cytoplasm. The catalysed reaction is N(7)-methyl-GTP + H2O = N(7)-methyl-GMP + diphosphate + H(+). Its function is as follows. Nucleoside triphosphate pyrophosphatase that hydrolyzes 7-methyl-GTP (m(7)GTP). May have a dual role in cell division arrest and in preventing the incorporation of modified nucleotides into cellular nucleic acids. The sequence is that of 7-methyl-GTP pyrophosphatase from Yersinia pseudotuberculosis serotype I (strain IP32953).